Consider the following 355-residue polypeptide: UDP-N-acetylglucosamine--N-acetylmuramyl-(pentapeptide) pyrophosphoryl-undecaprenol N-acetylglucosamine transferase (355 aa).

UDP-N-acetyl-alpha-D-glucosamine-binding positions include 12–14, Asn124, Arg160, Ser192, Ile243, 262–267, and Gln287; these read TGG and ALTVCE.

The protein belongs to the glycosyltransferase 28 family. MurG subfamily.

It localises to the cell inner membrane. It carries out the reaction di-trans,octa-cis-undecaprenyl diphospho-N-acetyl-alpha-D-muramoyl-L-alanyl-D-glutamyl-meso-2,6-diaminopimeloyl-D-alanyl-D-alanine + UDP-N-acetyl-alpha-D-glucosamine = di-trans,octa-cis-undecaprenyl diphospho-[N-acetyl-alpha-D-glucosaminyl-(1-&gt;4)]-N-acetyl-alpha-D-muramoyl-L-alanyl-D-glutamyl-meso-2,6-diaminopimeloyl-D-alanyl-D-alanine + UDP + H(+). Its pathway is cell wall biogenesis; peptidoglycan biosynthesis. Functionally, cell wall formation. Catalyzes the transfer of a GlcNAc subunit on undecaprenyl-pyrophosphoryl-MurNAc-pentapeptide (lipid intermediate I) to form undecaprenyl-pyrophosphoryl-MurNAc-(pentapeptide)GlcNAc (lipid intermediate II). The sequence is that of UDP-N-acetylglucosamine--N-acetylmuramyl-(pentapeptide) pyrophosphoryl-undecaprenol N-acetylglucosamine transferase from Haemophilus ducreyi (strain 35000HP / ATCC 700724).